The sequence spans 476 residues: Retinoic acid receptor gamma (476 aa).

A modulating region spans residues methionine 1–proline 109. The span at serine 81–serine 96 shows a compositional bias: low complexity. A disordered region spans residues serine 81–proline 102. 2 consecutive NR C4-type zinc fingers follow at residues cysteine 110–cysteine 130 and cysteine 146–cysteine 170. Positions cysteine 110–methionine 175 form a DNA-binding region, nuclear receptor. A hinge region spans residues serine 176–proline 205. The Nuclear localization signal signature appears at arginine 184 to lysine 189. One can recognise an NR LBD domain in the interval glutamate 206–proline 440. The tract at residues glutamate 435 to proline 476 is disordered. A compositionally biased stretch (polar residues) spans asparagine 462–proline 476.

The protein belongs to the nuclear hormone receptor family. NR1 subfamily. Heterodimer; with a rxr molecule. Binds DNA preferentially as a rar/rxr heterodimer. Expressed in embryos, tadpoles and various adult tissue such as kidney, testis, brain, liver, skeletal muscle and spleen.

The protein localises to the nucleus. In terms of biological role, receptor for retinoic acid. Retinoic acid receptors bind as heterodimers to their target response elements in response to their ligands, all-trans or 9-cis retinoic acid, and regulate gene expression in various biological processes. The rar/rxr heterodimers bind to the retinoic acid response elements (RARE) composed of tandem 5'-AGGTCA-3' sites known as DR1-DR5. This Xenopus laevis (African clawed frog) protein is Retinoic acid receptor gamma (rarg).